A 369-amino-acid chain; its full sequence is Pyrimidine monooxygenase RutA (369 aa).

FMN contacts are provided by residues 49–50 (IK), Asn-115, Glu-124, 140–141 (RY), and Ser-190.

This sequence belongs to the NtaA/SnaA/DszA monooxygenase family. RutA subfamily.

The catalysed reaction is uracil + FMNH2 + NADH + O2 = (Z)-3-ureidoacrylate + FMN + NAD(+) + H2O + H(+). The enzyme catalyses thymine + FMNH2 + NADH + O2 = (Z)-2-methylureidoacrylate + FMN + NAD(+) + H2O + H(+). Catalyzes the pyrimidine ring opening between N-3 and C-4 by an unusual flavin hydroperoxide-catalyzed mechanism, adding oxygen atoms in the process to yield ureidoacrylate peracid, that immediately reacts with FMN forming ureidoacrylate and FMN-N(5)-oxide. The FMN-N(5)-oxide reacts spontaneously with NADH to produce FMN. Requires the flavin reductase RutF to regenerate FMN in vivo. The protein is Pyrimidine monooxygenase RutA of Acinetobacter baylyi (strain ATCC 33305 / BD413 / ADP1).